A 46-amino-acid chain; its full sequence is MISMLRCISLFLSVILITGYFVTPVMSCNCKAPETALCARRCQQHG.

The N-terminal stretch at 1–27 is a signal peptide; the sequence is MISMLRCISLFLSVILITGYFVTPVMS. Intrachain disulfides connect Cys28–Cys38 and Cys30–Cys42. An essential for toxin activity region spans residues 40 to 41; the sequence is RR. His45 is modified (histidine amide).

As to expression, expressed by the venom gland.

Its subcellular location is the secreted. Functionally, neurotoxin that blocks voltage-independent calcium-activated potassium channels (KCNN1=SK1, KCNN2=SK2, KCNN3=SK3). The sequence is that of Apamin from Apis cerana cerana (Oriental honeybee).